The sequence spans 87 residues: Ribonuclease P protein component 1 (87 aa).

The protein belongs to the eukaryotic/archaeal RNase P protein component 1 family. In terms of assembly, consists of a catalytic RNA component and at least 4-5 protein subunits.

It is found in the cytoplasm. It catalyses the reaction Endonucleolytic cleavage of RNA, removing 5'-extranucleotides from tRNA precursor.. Its function is as follows. Part of ribonuclease P, a protein complex that generates mature tRNA molecules by cleaving their 5'-ends. The polypeptide is Ribonuclease P protein component 1 (Thermoplasma acidophilum (strain ATCC 25905 / DSM 1728 / JCM 9062 / NBRC 15155 / AMRC-C165)).